Consider the following 251-residue polypeptide: MLKGHLHSVESMGTVDGPGLRYILFTQGCLLRCLYCHNPDTWKINEPSREVTVDEMVNEILPYKPYFEASGGGVTVSGGEPLLQMPFLEQLFKELKANGVHTCIDTSAGCVNDTPAFNRHFDELQKHTDLILLDIKHIDNDKHIKLTGKPNTHILKFARKLSDMKQPVWIRHVLVPGISDDKEDLIKLGEFINSLDNVEKFEILPYHQLGVHKWKNLGIPYQLENVEPPDDEAVKEAYRYVNFNGKIPVTL.

Positions 15–244 (VDGPGLRYIL…KEAYRYVNFN (230 aa)) constitute a Radical SAM core domain. 3 residues coordinate [4Fe-4S] cluster: Cys29, Cys33, and Cys36. S-adenosyl-L-methionine contacts are provided by residues 35 to 37 (YCH), Gly79, 134 to 136 (DIK), and His207.

It belongs to the organic radical-activating enzymes family. It depends on [4Fe-4S] cluster as a cofactor.

Its subcellular location is the cytoplasm. It catalyses the reaction glycyl-[formate C-acetyltransferase] + reduced [flavodoxin] + S-adenosyl-L-methionine = glycin-2-yl radical-[formate C-acetyltransferase] + semiquinone [flavodoxin] + 5'-deoxyadenosine + L-methionine + H(+). In terms of biological role, activation of pyruvate formate-lyase under anaerobic conditions by generation of an organic free radical, using S-adenosylmethionine and reduced flavodoxin as cosubstrates to produce 5'-deoxy-adenosine. The chain is Pyruvate formate-lyase-activating enzyme (pflA) from Staphylococcus epidermidis (strain ATCC 12228 / FDA PCI 1200).